The following is a 396-amino-acid chain: Phosphoglycerate kinase (396 aa).

Substrate is bound by residues 21–23 (DFN), arginine 36, 59–62 (HLGK), arginine 119, and arginine 156. ATP is bound by residues lysine 206, glycine 294, glutamate 325, and 352 to 355 (GGDS).

Belongs to the phosphoglycerate kinase family. As to quaternary structure, monomer.

Its subcellular location is the cytoplasm. The enzyme catalyses (2R)-3-phosphoglycerate + ATP = (2R)-3-phospho-glyceroyl phosphate + ADP. Its pathway is carbohydrate degradation; glycolysis; pyruvate from D-glyceraldehyde 3-phosphate: step 2/5. The chain is Phosphoglycerate kinase from Staphylococcus aureus (strain bovine RF122 / ET3-1).